The chain runs to 545 residues: Prolyl 3-hydroxylase OGFOD1 (545 aa).

The interval 1–23 (MNGKRPADPGPARPMKKGKKQVS) is disordered. The Fe2OG dioxygenase domain occupies 137-239 (PTIDMSCAKY…RLSISGWFYG (103 aa)). Residues His-155 and Asp-157 each coordinate Fe cation. 2-oxoglutarate is bound at residue Tyr-169. His-218 contacts Fe cation. Arg-230 contributes to the 2-oxoglutarate binding site. The segment covering 371–380 (SEDDETEEKG) has biased composition (acidic residues). Positions 371–437 (SEDDETEEKG…EAKKESSVPM (67 aa)) are disordered. Over residues 383 to 393 (ETASAAAGTEE) the composition is skewed to low complexity. Polar residues predominate over residues 402–417 (PENNQVAAGSHSQENG).

The protein belongs to the TPA1 family. As to quaternary structure, monomer. Requires Fe(2+) as cofactor. L-ascorbate is required as a cofactor.

It localises to the cytoplasm. It is found in the nucleus. The enzyme catalyses [ribosomal protein uS12]-L-proline + 2-oxoglutarate + O2 = [ribosomal protein uS12]-(3S)-3-hydroxy-L-proline + succinate + CO2. Functionally, prolyl 3-hydroxylase that catalyzes 3-hydroxylation of 'Pro-62' of small ribosomal subunit uS12 (RPS23), thereby regulating protein translation termination efficiency. Involved in stress granule formation. The polypeptide is Prolyl 3-hydroxylase OGFOD1 (Ogfod1) (Mus musculus (Mouse)).